The primary structure comprises 115 residues: NADH-ubiquinone oxidoreductase chain 3 (115 aa).

The next 3 helical transmembrane spans lie at M4–L24, F55–L75, and M84–Y104.

This sequence belongs to the complex I subunit 3 family. In terms of assembly, core subunit of respiratory chain NADH dehydrogenase (Complex I) which is composed of 45 different subunits. Interacts with TMEM186. Interacts with TMEM242.

The protein resides in the mitochondrion inner membrane. The enzyme catalyses a ubiquinone + NADH + 5 H(+)(in) = a ubiquinol + NAD(+) + 4 H(+)(out). In terms of biological role, core subunit of the mitochondrial membrane respiratory chain NADH dehydrogenase (Complex I) which catalyzes electron transfer from NADH through the respiratory chain, using ubiquinone as an electron acceptor. Essential for the catalytic activity of complex I. In Reithrodon auritus (Bunny rat), this protein is NADH-ubiquinone oxidoreductase chain 3.